Reading from the N-terminus, the 561-residue chain is Putative transport protein YbjL (561 aa).

5 helical membrane-spanning segments follow: residues 8 to 28 (LLNG…LCLG), 32 to 52 (LGSV…LLGQ), 66 to 86 (FMLF…SIFF), 94 to 114 (MLAL…GKLF), and 158 to 178 (NLSL…IVGA). RCK C-terminal domains lie at 200–288 (RGLD…SFRN) and 292–373 (VFDR…RIGF). The next 5 membrane-spanning stretches (helical) occupy residues 383–403 (LLAF…TFQF), 406–426 (FSFG…LGFL), 447–467 (FGLM…INNG), 475–495 (MLIA…LFGA), and 537–557 (GTYA…VIIW).

This sequence belongs to the AAE transporter (TC 2.A.81) family. YbjL subfamily.

Its subcellular location is the cell membrane. This Salmonella choleraesuis (strain SC-B67) protein is Putative transport protein YbjL.